The following is a 257-amino-acid chain: Imidazole glycerol phosphate synthase subunit HisF (257 aa).

Active-site residues include D11 and D130.

Belongs to the HisA/HisF family. As to quaternary structure, heterodimer of HisH and HisF.

Its subcellular location is the cytoplasm. It catalyses the reaction 5-[(5-phospho-1-deoxy-D-ribulos-1-ylimino)methylamino]-1-(5-phospho-beta-D-ribosyl)imidazole-4-carboxamide + L-glutamine = D-erythro-1-(imidazol-4-yl)glycerol 3-phosphate + 5-amino-1-(5-phospho-beta-D-ribosyl)imidazole-4-carboxamide + L-glutamate + H(+). It participates in amino-acid biosynthesis; L-histidine biosynthesis; L-histidine from 5-phospho-alpha-D-ribose 1-diphosphate: step 5/9. Its function is as follows. IGPS catalyzes the conversion of PRFAR and glutamine to IGP, AICAR and glutamate. The HisF subunit catalyzes the cyclization activity that produces IGP and AICAR from PRFAR using the ammonia provided by the HisH subunit. This Xylella fastidiosa (strain M23) protein is Imidazole glycerol phosphate synthase subunit HisF.